The following is a 186-amino-acid chain: ADP-ribosylation factor-like protein 8A (186 aa).

The note=Mediates targeting to membranes intramembrane region spans 1-19; the sequence is MLALFNKLLDWFRALFWKE. GTP-binding positions include 29-35, 71-75, and 130-133; these read QYSGKTT, DIGGQ, and NKRD.

The protein belongs to the small GTPase superfamily. Arf family.

It localises to the late endosome membrane. It is found in the lysosome membrane. Its subcellular location is the cytoplasm. The protein localises to the cytoskeleton. The protein resides in the spindle. It localises to the cell projection. It is found in the axon. Its subcellular location is the synapse. In terms of biological role, plays a role in lysosome motility. In neurons, mediates the anterograde axonal long-range transport of presynaptic lysosome-related vesicles required for presynaptic biogenesis and synaptic function. May play a role in chromosome segregation. The sequence is that of ADP-ribosylation factor-like protein 8A (ARL8A) from Gallus gallus (Chicken).